The chain runs to 390 residues: Altered inheritance of mitochondria protein 6 (390 aa).

Residues 1–26 (MLGLKGCLTILIGYVIAVCALFSSRG) form the signal peptide.

The protein belongs to the AIM6 family.

This chain is Altered inheritance of mitochondria protein 6 (AIM6), found in Saccharomyces cerevisiae (strain RM11-1a) (Baker's yeast).